We begin with the raw amino-acid sequence, 356 residues long: MGLLRIMMPPKLQLLAVLTFGVLMLFLENQIQNLEESREKLERAIARHEVREIEQRHSMDGSRQEIALDDDEDILIIYNRVPKTASTSFTNIAYDLCAKNKYHVLHINTTKNNPVMSLQDQVRFVKNVSSWREMKPGFYHGHVSFLDFTKFGVKKKPIYINVIRDPIERLVSYYYFLRFGDDYRPGLRRRKQGDKKTFDECVAAGGSDCAPEKLWLQIPFFCGHSSECWNVGSRWALDQAKYNLVNEYFLVGVTEELEDFIMLLEAALPRFFRGATELYRSGKKSHLRKTTEKKAPSKETTAKLQQSDIWKMENEFYEFALEQFQFVRAHAVREKDGELYVLAPNFFYEKIYPKSN.

The Cytoplasmic portion of the chain corresponds to 1 to 11 (MGLLRIMMPPK). The chain crosses the membrane as a helical; Signal-anchor for type II membrane protein span at residues 12 to 28 (LQLLAVLTFGVLMLFLE). Residues 24-51 (MLFLENQIQNLEESREKLERAIARHEVR) adopt a coiled-coil conformation. At 29 to 356 (NQIQNLEESR…FYEKIYPKSN (328 aa)) the chain is on the lumenal side. 6 residues coordinate adenosine 3',5'-bisphosphate: Lys-83, Thr-84, Ala-85, Ser-86, Thr-87, and Ser-88. 2 N-linked (GlcNAc...) asparagine glycosylation sites follow: Asn-108 and Asn-127. Residues His-140 and His-142 contribute to the active site. Adenosine 3',5'-bisphosphate contacts are provided by Arg-164 and Ser-172. Intrachain disulfides connect Cys-201/Cys-209 and Cys-222/Cys-228. Adenosine 3',5'-bisphosphate is bound by residues Tyr-279, Ser-285, Thr-290, and Lys-293.

It belongs to the sulfotransferase 3 family. As to quaternary structure, homotrimer.

The protein resides in the golgi apparatus membrane. Functionally, catalyzes the transfer of a sulfo group from 3'-phospho-5'-adenylyl sulfate (PAPS) to the 2-OH position of iduronic acid (IdoA) or glucuronic acid (GlcA) within the heparan sulfate (HS) chain and participates in HS biosynthesis. The sequence is that of Heparan sulfate 2-O-sulfotransferase 1 from Xenopus laevis (African clawed frog).